Here is a 66-residue protein sequence, read N- to C-terminus: UPF0434 protein M446_0487 (66 aa).

This sequence belongs to the UPF0434 family.

The protein is UPF0434 protein M446_0487 of Methylobacterium sp. (strain 4-46).